We begin with the raw amino-acid sequence, 131 residues long: Bacteriohemerythrin (131 aa).

Positions 22, 58, 62, 77, 81, 117, and 122 each coordinate Fe cation.

It belongs to the hemerythrin family. As to quaternary structure, monomer.

Functionally, oxygen-binding protein. May be involved in a storage mechanism or for delivery to oxygen-requiring enzymes. The oxygen-binding site contains two iron atoms. The chain is Bacteriohemerythrin from Methylococcus capsulatus (strain ATCC 33009 / NCIMB 11132 / Bath).